A 346-amino-acid polypeptide reads, in one-letter code: Formimidoylglutamase (346 aa).

Positions 145, 180, 182, 184, 271, and 273 each coordinate Mn(2+).

Belongs to the arginase family. Mn(2+) is required as a cofactor.

The enzyme catalyses N-formimidoyl-L-glutamate + H2O = formamide + L-glutamate. Its pathway is amino-acid degradation; L-histidine degradation into L-glutamate; L-glutamate from N-formimidoyl-L-glutamate (hydrolase route): step 1/1. Functionally, catalyzes the conversion of N-formimidoyl-L-glutamate to L-glutamate and formamide. The sequence is that of Formimidoylglutamase from Psychrobacter cryohalolentis (strain ATCC BAA-1226 / DSM 17306 / VKM B-2378 / K5).